A 233-amino-acid polypeptide reads, in one-letter code: GSK-3-binding protein FRAT2 (233 aa).

The interval 1-24 (MPCRREEEEEAGEEAEGEEEEDDS) is disordered. A compositionally biased stretch (acidic residues) spans 7–24 (EEEEAGEEAEGEEEEDDS). Residues 174 to 196 (DPHRLLQQLVLSGNLIKEAVRRL) form an involved in GSK-3 binding region. The interval 204-233 (AATGPASAPGPGGGRSGPDRIALQPSGSLL) is disordered.

Belongs to the GSK-3-binding protein family. In terms of assembly, binds GSK-3 and prevents GSK-3-dependent phosphorylation.

Positively regulates the Wnt signaling pathway by stabilizing beta-catenin through the association with GSK-3. This is GSK-3-binding protein FRAT2 (FRAT2) from Homo sapiens (Human).